We begin with the raw amino-acid sequence, 234 residues long: HTH-type transcriptional regulator ArcR (234 aa).

40-129 (VRHYTKGQVI…MAFLCKANDD (90 aa)) serves as a coordination point for a nucleoside 3',5'-cyclic phosphate. Residues 155-228 (KFAKDRIIKL…HKNWLVSKHL (74 aa)) enclose the HTH crp-type domain. The H-T-H motif DNA-binding region spans 188–207 (IQLMSDMAGISRETAGHIIH).

It localises to the cytoplasm. Functionally, positively regulates the expression of the arcABDCR operon under anaerobic conditions, thus playing an essential role in arginine catabolism. May also control the expression of genes encoding proteins which are involved in anaerobic metabolism. Can bind cyclic AMP. The sequence is that of HTH-type transcriptional regulator ArcR (arcR) from Staphylococcus aureus (strain MSSA476).